A 92-amino-acid polypeptide reads, in one-letter code: C-C motif chemokine 4 (92 aa).

Residues 1–23 (MKLCVSALSLLLLVAAFCAPGFS) form the signal peptide. Disulfide bonds link cysteine 34/cysteine 58 and cysteine 35/cysteine 74.

This sequence belongs to the intercrine beta (chemokine CC) family. In terms of assembly, homodimer.

It is found in the secreted. Its function is as follows. Monokine with inflammatory and chemokinetic properties. The polypeptide is C-C motif chemokine 4 (Ccl4) (Mus musculus (Mouse)).